A 394-amino-acid polypeptide reads, in one-letter code: Acetyl-CoA acetyltransferase (394 aa).

Residue cysteine 88 is the Acyl-thioester intermediate of the active site. Residues histidine 349 and cysteine 379 each act as proton acceptor in the active site.

The protein belongs to the thiolase-like superfamily. Thiolase family.

Its subcellular location is the cytoplasm. It carries out the reaction 2 acetyl-CoA = acetoacetyl-CoA + CoA. Its pathway is metabolic intermediate biosynthesis; (R)-mevalonate biosynthesis; (R)-mevalonate from acetyl-CoA: step 1/3. This is Acetyl-CoA acetyltransferase (atoB) from Escherichia coli (strain K12).